Consider the following 713-residue polypeptide: Segment polarity protein dishevelled homolog DVL-3 (713 aa).

Residues 1 to 82 (MGETKVIYHL…RVVCWLVSAD (82 aa)) enclose the DIX domain. Polar residues-rich tracts occupy residues 87–98 (DAGSVCADNQSD) and 118–127 (HPNTRGSQEN). Positions 87 to 235 (DAGSVCADNQ…PRIERSSSFS (149 aa)) are disordered. The segment covering 140 to 155 (AHRERPRRKETPEHAT) has biased composition (basic and acidic residues). Over residues 173–189 (ESSSTLMSSELDSTSFF) the composition is skewed to low complexity. A compositionally biased stretch (polar residues) spans 199-210 (RFSNSTEQSSAS). The span at 212 to 225 (LMRRHKRRRRKPKA) shows a compositional bias: basic residues. One can recognise a PDZ domain in the interval 248–333 (TVTLNMEKYN…KPGPITLTVA (86 aa)). The DEP domain occupies 421–495 (PESGLEVRDR…SEQCYYIFGD (75 aa)). Over residues 508–518 (HDGSSGTSDQD) the composition is skewed to polar residues. Disordered regions lie at residues 508-527 (HDGS…PHPG) and 545-652 (YSPH…GPPG). Low complexity predominate over residues 564 to 579 (GSQHSEGSRSSGSNRS). Composition is skewed to basic and acidic residues over residues 580–593 (STEK…KGGD) and 602–618 (ESDH…RAAS). The span at 629–646 (HRSHHSIAHSIRSHHTHH) shows a compositional bias: basic residues.

Belongs to the DSH family.

Its subcellular location is the cytoplasm. Involved in the signal transduction pathway mediated by multiple Wnt genes. Required during ciliogenesis for the docking of basal bodies to the apical plasma membrane. The protein is Segment polarity protein dishevelled homolog DVL-3 of Xenopus tropicalis (Western clawed frog).